The sequence spans 196 residues: Chromophore lyase CpcT/CpeT (196 aa).

This sequence belongs to the CpcT/CpeT biliprotein lyase family.

Covalently attaches a chromophore to Cys residue(s) of phycobiliproteins. This is Chromophore lyase CpcT/CpeT from Synechocystis sp. (strain ATCC 27184 / PCC 6803 / Kazusa).